The primary structure comprises 155 residues: uncharacterized protein (155 aa).

The HTH asnC-type domain occupies 4-65 (IDEIDEVIVR…VVDPSFFGEF (62 aa)). The segment at residues 23–42 (LTELGRKVGLTASAVKNRIE) is a DNA-binding region (H-T-H motif).

This is an uncharacterized protein from Pyrococcus horikoshii (strain ATCC 700860 / DSM 12428 / JCM 9974 / NBRC 100139 / OT-3).